Here is a 2201-residue protein sequence, read N- to C-terminus: RNA-directed RNA polymerase L (2201 aa).

The tract at residues 26-285 (KNIMLAQTQI…VCSKSVEYTF (260 aa)) is endonuclease. Glutamate 51, aspartate 88, and glutamate 101 together coordinate Mn(2+). Lysine 114 is an active-site residue. The RdRp catalytic domain maps to 1156–1352 (LDMKSVVRQS…FLSDRLNKFV (197 aa)). Position 1312 (aspartate 1312) interacts with Mg(2+).

Belongs to the Bunyavirales RNA polymerase family. In terms of assembly, homomultimer; the oligomeric structure is essential for the polymerase activity. Interacts with nucleoprotein N. Interacts with protein Z; this interaction inhibits viral transcription and replication, Z partially blocks the product exit tunnel for the releasing nascent RNA product. It depends on Mn(2+) as a cofactor. Mg(2+) serves as cofactor.

It localises to the virion. The protein localises to the host cytoplasm. The enzyme catalyses RNA(n) + a ribonucleoside 5'-triphosphate = RNA(n+1) + diphosphate. In terms of biological role, RNA-dependent RNA polymerase, which is responsible for the replication and transcription of the viral RNA genome using antigenomic RNA as an intermediate. During transcription, synthesizes subgenomic RNAs and assures their capping by a cap-snatching mechanism, which involves the endonuclease activity cleaving the host capped pre-mRNAs. These short capped RNAs are then used as primers for viral transcription. The 3'-end of subgenomic mRNAs molecules are heterogeneous and not polyadenylated. The replicase function is to direct synthesis of antigenomic and genomic RNA which are encapsidated and non capped. As a consequence of the use of the same enzyme for both transcription and replication, these mechanisms need to be well coordinated. These processes may be regulated by proteins N and Z in a dose-dependent manner. Z protein inhibits the viral polymerase L und thus the viral transcription and RNA synthesis. The chain is RNA-directed RNA polymerase L from Oecomys bicolor (Bicolored arboreal rice rat).